Here is a 99-residue protein sequence, read N- to C-terminus: Protein translation factor SUI1 homolog (99 aa).

This sequence belongs to the SUI1 family.

The sequence is that of Protein translation factor SUI1 homolog from Pyrococcus horikoshii (strain ATCC 700860 / DSM 12428 / JCM 9974 / NBRC 100139 / OT-3).